Reading from the N-terminus, the 706-residue chain is Heat shock protein 75 kDa, mitochondrial (706 aa).

Residues 1–60 (MARELRALLLWGRGLQSALRAPALAGVRRGKPVLHLQKTTVHFRDPTQSLASGISAGQLY) constitute a mitochondrion transit peptide. ATP contacts are provided by Asn121 and Asp160. The residue at position 172 (Ser172) is a Phosphoserine. Asn173 lines the ATP pocket. Residue Thr176 is modified to Phosphothreonine. The residue at position 196 (Ser196) is a Phosphoserine. Phe207 is a binding site for ATP. N6-acetyllysine occurs at positions 264, 326, and 334. Position 404 (Arg404) interacts with ATP. N6-acetyllysine is present on residues Lys426, Lys433, and Lys468. Residue Thr496 is modified to Phosphothreonine. A Phosphoserine modification is found at Ser570.

It belongs to the heat shock protein 90 family. In terms of assembly, binds to the intracellular domain of tumor necrosis factor type 1 receptor. Binds to RB1. Interacts with SRC. Interacts with SDHA.

Its subcellular location is the mitochondrion. The protein resides in the mitochondrion inner membrane. It localises to the mitochondrion matrix. In terms of biological role, chaperone that expresses an ATPase activity. Involved in maintaining mitochondrial function and polarization, downstream of PINK1 and mitochondrial complex I. Is a negative regulator of mitochondrial respiration able to modulate the balance between oxidative phosphorylation and aerobic glycolysis. The impact of TRAP1 on mitochondrial respiration is probably mediated by modulation of mitochondrial SRC and inhibition of SDHA. This is Heat shock protein 75 kDa, mitochondrial (Trap1) from Rattus norvegicus (Rat).